A 585-amino-acid polypeptide reads, in one-letter code: ATP-dependent lipid A-core flippase (585 aa).

The next 5 helical transmembrane spans lie at 24–44 (LWKV…ASAA), 65–85 (LLVP…SFCG), 143–163 (ITVV…MIYV), 165–185 (WKLT…IGYV), and 253–273 (PIIQ…ALSP). The region spanning 29 to 310 (ALAVLGNVIY…LTEVNAVIQR (282 aa)) is the ABC transmembrane type-1 domain. Residues 342–578 (LEFKSLGFAY…DGAYAALHKL (237 aa)) form the ABC transporter domain. Residue 376–383 (GRSGSGKS) participates in ATP binding.

The protein belongs to the ABC transporter superfamily. Lipid exporter (TC 3.A.1.106) family. As to quaternary structure, homodimer.

It is found in the cell inner membrane. It catalyses the reaction ATP + H2O + lipid A-core oligosaccharideSide 1 = ADP + phosphate + lipid A-core oligosaccharideSide 2.. Functionally, involved in lipopolysaccharide (LPS) biosynthesis. Translocates lipid A-core from the inner to the outer leaflet of the inner membrane. Transmembrane domains (TMD) form a pore in the inner membrane and the ATP-binding domain (NBD) is responsible for energy generation. In Hahella chejuensis (strain KCTC 2396), this protein is ATP-dependent lipid A-core flippase.